The primary structure comprises 291 residues: tRNA (guanine-N(1)-)-methyltransferase (291 aa).

Residues G160 and I184–L189 each bind S-adenosyl-L-methionine.

Belongs to the RNA methyltransferase TrmD family. As to quaternary structure, homodimer.

The protein localises to the cytoplasm. It carries out the reaction guanosine(37) in tRNA + S-adenosyl-L-methionine = N(1)-methylguanosine(37) in tRNA + S-adenosyl-L-homocysteine + H(+). Its function is as follows. Specifically methylates guanosine-37 in various tRNAs. This is tRNA (guanine-N(1)-)-methyltransferase from Corynebacterium efficiens (strain DSM 44549 / YS-314 / AJ 12310 / JCM 11189 / NBRC 100395).